Reading from the N-terminus, the 494-residue chain is Flavin-containing monooxygenase ustF2 (494 aa).

The first 21 residues, 1 to 21, serve as a signal peptide directing secretion; that stretch reads MANPQTTRVAVVGAGISGVLA. 13 to 18 contributes to the FAD binding site; sequence GAGISG. Residues 73 to 93 form a disordered region; it reads EPSYPAMKPSKADPPATNEQE. 250 to 255 is an NADP(+) binding site; sequence GGGVSS. Asn459 carries an N-linked (GlcNAc...) asparagine glycan.

Belongs to the FMO family.

The protein operates within mycotoxin biosynthesis. Its function is as follows. Flavin-containing monooxygenase; part of the gene cluster that mediates the biosynthesis of the secondary metabolite ustiloxin B, an antimitotic tetrapeptide. First, ustA is processed by the subtilisin-like endoprotease Kex2 that is outside the ustiloxin B gene cluster, at the C-terminal side of Arg-Lys, after transfer to Golgi apparatus through the endoplasmic reticulum (ER). Cleavage by KEX2 generates 16 peptides YAIG-I to YAIG-XVI. To process the precursor peptide further, at least two peptidases are necessary to cleave the N-terminal and C-terminal sides of the Tyr-Ala-Ile-Gly core peptide which serves as backbone for the synthesis of ustiloxin B, through cyclization and modification of the tyrosine with a non-protein coding amino acid, norvaline. One of the two peptidases must be the serine peptidase ustP; and the other pepdidase is probably ustH. Macrocyclization of the core peptide derived from ustA requires the tyrosinase ustQ, as well as the homologous oxidases ustYa and ustYb, and leads to the production of the first cyclization product N-desmethylustiloxin F. For the formation of N-desmethylustiloxin F, three oxidation steps are required, hydroxylation at the benzylic position, hydroxylation at either the aromatic ring of Tyr or beta-position of Ile, and oxidative cyclization. UstQ may catalyze the oxidation of a phenol moiety, whereas the ustYa and ustYb are most likely responsible for the remaining two-step oxidations. N-desmethylustiloxin F is then methylated by ustM to yield ustiloxin F which in turn substrate of the cytochrome P450 monooxygenase ustC which catalyzes the formation of S-deoxyustiloxin H. The flavoprotein monooxygenases ustF1 and ustF2 then participate in the modification of the side chain of S-deoxyustiloxin H, leading to the synthesis of an oxime intermediate, via ustiloxin H. Finally, carboxylative dehydration performed by the cysteine desulfurase-like protein ustD yields ustiloxin B. The chain is Flavin-containing monooxygenase ustF2 from Aspergillus flavus (strain ATCC 200026 / FGSC A1120 / IAM 13836 / NRRL 3357 / JCM 12722 / SRRC 167).